The sequence spans 722 residues: MSWFTDLAGRAEDFLNLVDQGAATALKTKDGNDLIMDSITDYSGNFEEKQKTTEKYQSQAKSSFISSAADNIKHQKATMLAGTANIKTGTRSSIESSHNSSVNVSSHRSTTQFVRQKKSEPDDEQLFDFLNSSDKVHSSSQKETRKESASVNQAVKPISQSVTMAEDFHNTTEDAGVPLLPELGITEPVVKAETLSDSGSSASLSTTGDPKSHELSNLRLENQLLRNEVQSLNQEMASLIQRSKETQEELNEARTRMEKWNGDNSKNDRTARELRAQVDDLSEAMAAKDSQLAVLKVRLQEADQLLKSRTETLESLQIEKSRILQDQSEGSSIHNQALQTMQERLREAESTLIREQESYKQIQNEFATRLSKIEAERQNLAEAVILAEKKHMEEKRKSDDLQQQLKTSKVGLDSLKQEMADYKQKATRILQSKEKLINSLKEGSGIEGLDSHSASTMELEEMRHERDMQREEIQKLMGQIQQLKAELQDVETQQVSEAESAREQLQDVHEQFATQQRAKQELEAELERQKQEFQYIQEDLYKTKNTLQGRIRDREDEIQKLRNQLTNKALSSSSQTELENRLHQLTETLIQKQTMLENLSTEKNSLVYQLERLEHQLKNVQGSSLNGTSINMSVIESNEGARMRNVPVLFSDSDPNVAGMYGRVRKAATSIDQFSIRLGIFLRRYPIARVFIIIYMALLHLWVMIVLLTYTPEMHHDTPSGK.

Residues 1–689 are Cytoplasmic-facing; that stretch reads MSWFTDLAGR…IFLRRYPIAR (689 aa). 2 disordered regions span residues 90 to 158 and 194 to 215; these read TRSS…VKPI and TLSDSGSSASLSTTGDPKSHEL. Residues 91 to 109 are compositionally biased toward low complexity; sequence RSSIESSHNSSVNVSSHRS. Residues 134 to 148 show a composition bias toward basic and acidic residues; sequence DKVHSSSQKETRKES. Positions 149 to 158 are enriched in polar residues; that stretch reads ASVNQAVKPI. The segment covering 195 to 209 has biased composition (low complexity); that stretch reads LSDSGSSASLSTTGD. A coiled-coil region spans residues 211–622; that stretch reads KSHELSNLRL…LEHQLKNVQG (412 aa). Residues 690 to 710 traverse the membrane as a helical; Anchor for type IV membrane protein segment; the sequence is VFIIIYMALLHLWVMIVLLTY. At 711–722 the chain is on the lumenal side; sequence TPEMHHDTPSGK.

Its subcellular location is the golgi apparatus membrane. Functionally, involved in maintaining Golgi structure. Stimulates the formation of Golgi stacks and ribbons. Involved in intra-Golgi retrograde transport. This is Golgin subfamily A member 5 (golga5) from Xenopus laevis (African clawed frog).